A 237-amino-acid chain; its full sequence is Ribosomal RNA small subunit methyltransferase G (237 aa).

Residues Gly-78, Phe-83, 129-130, and Arg-148 contribute to the S-adenosyl-L-methionine site; that span reads AE.

It belongs to the methyltransferase superfamily. RNA methyltransferase RsmG family.

It localises to the cytoplasm. Its function is as follows. Specifically methylates the N7 position of a guanine in 16S rRNA. The sequence is that of Ribosomal RNA small subunit methyltransferase G from Streptococcus pyogenes serotype M4 (strain MGAS10750).